Consider the following 147-residue polypeptide: Ribonuclease P protein component 2 (147 aa).

It belongs to the eukaryotic/archaeal RNase P protein component 2 family. As to quaternary structure, consists of a catalytic RNA component and at least 4-5 protein subunits.

Its subcellular location is the cytoplasm. It carries out the reaction Endonucleolytic cleavage of RNA, removing 5'-extranucleotides from tRNA precursor.. Its function is as follows. Part of ribonuclease P, a protein complex that generates mature tRNA molecules by cleaving their 5'-ends. This Methanocorpusculum labreanum (strain ATCC 43576 / DSM 4855 / Z) protein is Ribonuclease P protein component 2.